The chain runs to 611 residues: Actin-interacting protein 1 (611 aa).

9 WD repeats span residues 57 to 96 (EHSH…HILK), 145 to 185 (GQAR…FKST), 188 to 227 (EHTK…KTGV), 237 to 276 (AHSG…VEKT), 322 to 361 (GHNK…SNRV), 446 to 485 (PISY…VSEV), 489 to 528 (VHPA…ELAH), 534 to 573 (FHTA…DHPI), and 579 to 610 (HAMS…WNVP).

Belongs to the WD repeat AIP1 family.

The protein resides in the cytoplasm. It is found in the cytoskeleton. Functionally, induces disassembly of actin filaments in conjunction with ADF/cofilin family proteins. Regulator of actin organization in myofibrils. The sequence is that of Actin-interacting protein 1 (unc-78) from Caenorhabditis elegans.